The primary structure comprises 120 residues: uncharacterized protein (120 aa).

The segment at 70-109 (CARCRRSLTLTPAVSCLPCGHSCLCTDCDQLFANVCFECK) adopts an RING-type zinc-finger fold.

This is an uncharacterized protein from Orgyia pseudotsugata multicapsid polyhedrosis virus (OpMNPV).